Reading from the N-terminus, the 260-residue chain is 14-3-3-like protein (260 aa).

Belongs to the 14-3-3 family.

The sequence is that of 14-3-3-like protein from Pisum sativum (Garden pea).